Here is a 182-residue protein sequence, read N- to C-terminus: UPF0397 protein SPT_0523 (182 aa).

5 helical membrane passes run V10–T30, L46–I66, Y73–F93, I109–P129, and I148–A168.

Belongs to the UPF0397 family.

The protein resides in the cell membrane. The chain is UPF0397 protein SPT_0523 from Streptococcus pneumoniae (strain Taiwan19F-14).